The chain runs to 196 residues: ATP-dependent Clp protease proteolytic subunit (196 aa).

Catalysis depends on S101, which acts as the Nucleophile. Residue H126 is part of the active site.

The protein belongs to the peptidase S14 family. In terms of assembly, component of the chloroplastic Clp protease core complex.

The protein localises to the plastid. It is found in the chloroplast stroma. It catalyses the reaction Hydrolysis of proteins to small peptides in the presence of ATP and magnesium. alpha-casein is the usual test substrate. In the absence of ATP, only oligopeptides shorter than five residues are hydrolyzed (such as succinyl-Leu-Tyr-|-NHMec, and Leu-Tyr-Leu-|-Tyr-Trp, in which cleavage of the -Tyr-|-Leu- and -Tyr-|-Trp bonds also occurs).. Functionally, cleaves peptides in various proteins in a process that requires ATP hydrolysis. Has a chymotrypsin-like activity. Plays a major role in the degradation of misfolded proteins. The protein is ATP-dependent Clp protease proteolytic subunit of Panax ginseng (Korean ginseng).